A 283-amino-acid polypeptide reads, in one-letter code: BTB/POZ domain-containing protein KCTD15 (283 aa).

A disordered region spans residues 1-33; the sequence is MPHRKERPSGSSLHAHGSTGTAEGGSMSRLSLT. Phosphoserine occurs at positions 31, 35, and 38. The 71-residue stretch at 56-126 folds into the BTB domain; sequence APVHIDVGGH…LRTSKLLLPD (71 aa).

In terms of assembly, forms oligomers, predominantly homopentamers. Interacts with KCTD1, probably forming heteropentamers depending on its abundance in a cell-type dependent manner. Interacts with TFAP2A; this interaction inhibits TFAP2A transcriptional activation.

The protein localises to the nucleus. During embryonic development, interferes with neural crest formation. Inhibits AP2 transcriptional activity by interaction with its activation domain. This chain is BTB/POZ domain-containing protein KCTD15 (KCTD15), found in Bos taurus (Bovine).